Consider the following 218-residue polypeptide: Ribosomal RNA small subunit methyltransferase G (218 aa).

S-adenosyl-L-methionine-binding positions include Gly82, Leu87, 137–138, and Arg152; that span reads VE.

This sequence belongs to the methyltransferase superfamily. RNA methyltransferase RsmG family.

It localises to the cytoplasm. The enzyme catalyses guanosine(527) in 16S rRNA + S-adenosyl-L-methionine = N(7)-methylguanosine(527) in 16S rRNA + S-adenosyl-L-homocysteine. Functionally, specifically methylates the N7 position of guanine in position 527 of 16S rRNA. The protein is Ribosomal RNA small subunit methyltransferase G of Herminiimonas arsenicoxydans.